A 159-amino-acid chain; its full sequence is MTQLTHINTAGEAHMVDVSAKNETVREARAEAFVDMQAATLAMIIDGSHHKGDVFATARIAGIQAAKKTWELIPLCHPLLLTKVEVKLEAQPEHNRVRIETCCRLTGKTGVEMEALTAASVAALTIYDMCKAVQKDMIIGPVRLLTKSGGKSGDFKVDI.

Substrate is bound by residues L75–H77 and M113–E114. The active site involves D128.

This sequence belongs to the MoaC family. As to quaternary structure, homohexamer; trimer of dimers.

It carries out the reaction (8S)-3',8-cyclo-7,8-dihydroguanosine 5'-triphosphate = cyclic pyranopterin phosphate + diphosphate. The protein operates within cofactor biosynthesis; molybdopterin biosynthesis. Its function is as follows. Catalyzes the conversion of (8S)-3',8-cyclo-7,8-dihydroguanosine 5'-triphosphate to cyclic pyranopterin monophosphate (cPMP). This Yersinia pseudotuberculosis serotype O:1b (strain IP 31758) protein is Cyclic pyranopterin monophosphate synthase.